The following is a 218-amino-acid chain: GTP cyclohydrolase 1 (218 aa).

Cysteine 109, histidine 112, and cysteine 180 together coordinate Zn(2+).

The protein belongs to the GTP cyclohydrolase I family. In terms of assembly, toroid-shaped homodecamer, composed of two pentamers of five dimers.

The catalysed reaction is GTP + H2O = 7,8-dihydroneopterin 3'-triphosphate + formate + H(+). It participates in cofactor biosynthesis; 7,8-dihydroneopterin triphosphate biosynthesis; 7,8-dihydroneopterin triphosphate from GTP: step 1/1. The polypeptide is GTP cyclohydrolase 1 (Histophilus somni (strain 129Pt) (Haemophilus somnus)).